The sequence spans 553 residues: ATP synthase F(1) complex subunit alpha, mitochondrial (553 aa).

The transit peptide at Met-1–Leu-43 directs the protein to the mitochondrion. At Gln-44 the chain carries Pyrrolidone carboxylic acid. 2 positions are modified to phosphoserine: Ser-53 and Ser-65. Ser-76 bears the Phosphoserine; alternate mark. An O-linked (GlcNAc) serine; alternate glycan is attached at Ser-76. Ser-106 carries the phosphoserine modification. 3 positions are modified to N6-acetyllysine: Lys-123, Lys-126, and Lys-132. At Thr-134 the chain carries Phosphothreonine. At Lys-161 the chain carries N6-acetyllysine; alternate. Position 161 is an N6-succinyllysine; alternate (Lys-161). Residue Ser-166 is modified to Phosphoserine. The residue at position 167 (Lys-167) is an N6-acetyllysine; alternate. Residue Lys-167 is modified to N6-succinyllysine; alternate. Position 184 is a phosphoserine (Ser-184). Omega-N-methylarginine is present on Arg-204. Gln-215, Gly-217, Lys-218, Thr-219, and Ser-220 together coordinate ATP. Thr-219 provides a ligand contact to Mg(2+). 2 positions are modified to N6-acetyllysine; alternate: Lys-230 and Lys-239. N6-succinyllysine; alternate is present on residues Lys-230 and Lys-239. Lys-240 bears the N6-acetyllysine mark. 2 positions are modified to N6-acetyllysine; alternate: Lys-261 and Lys-305. N6-succinyllysine; alternate occurs at positions 261 and 305. Asp-312 serves as a coordination point for Mg(2+). An N6-acetyllysine; alternate modification is found at Lys-427. Lys-427 is subject to N6-succinyllysine; alternate. Lys-434 is modified (N6-acetyllysine). ATP contacts are provided by Gln-473 and Gln-475. Residues Lys-498, Lys-506, Lys-531, and Lys-539 each carry the N6-acetyllysine; alternate modification. N6-succinyllysine; alternate is present on residues Lys-498, Lys-506, Lys-531, and Lys-539. Lys-541 is modified (N6-acetyllysine).

Belongs to the ATPase alpha/beta chains family. In terms of assembly, homotrimer. Component of the ATP synthase complex composed at least of ATP5F1A/subunit alpha, ATP5F1B/subunit beta, ATP5MC1/subunit c (homooctomer), MT-ATP6/subunit a, MT-ATP8/subunit 8, ATP5ME/subunit e, ATP5MF/subunit f, ATP5MG/subunit g, ATP5MK/subunit k, ATP5MJ/subunit j, ATP5F1C/subunit gamma, ATP5F1D/subunit delta, ATP5F1E/subunit epsilon, ATP5PF/subunit F6, ATP5PB/subunit b, ATP5PD/subunit d, ATP5PO/subunit OSCP. ATP synthase complex consists of a soluble F(1) head domain (subunits alpha(3) and beta(3)) - the catalytic core - and a membrane F(0) domain - the membrane proton channel (subunits c, a, 8, e, f, g, k and j). These two domains are linked by a central stalk (subunits gamma, delta, and epsilon) rotating inside the F1 region and a stationary peripheral stalk (subunits F6, b, d, and OSCP). Interacts with ATPAF2. Interacts with HRG; the interaction occurs on the surface of T-cells and alters the cell morphology when associated with concanavalin (in vitro). Interacts with PLG (angiostatin peptide); the interaction inhibits most of the angiogenic properties of angiostatin. Interacts with BLOC1S1. Interacts with BCL2L1 isoform BCL-X(L); the interaction mediates the association of BCL2L1 isoform BCL-X(L) with the mitochondrial membrane F(1)F(0) ATP synthase and enhances neurons metabolic efficiency. Interacts with CLN5 and PPT1. Interacts with S100A1; this interaction increases F1-ATPase activity. Interacts with ABCB7; this interaction allows the regulation of cellular iron homeostasis and cellular reactive oxygen species (ROS) levels in cardiomyocytes. Acetylated on lysine residues. BLOC1S1 is required for acetylation. In terms of tissue distribution, heart muscle (at protein level). Heart and liver.

The protein localises to the mitochondrion inner membrane. It localises to the cell membrane. Functionally, subunit alpha, of the mitochondrial membrane ATP synthase complex (F(1)F(0) ATP synthase or Complex V) that produces ATP from ADP in the presence of a proton gradient across the membrane which is generated by electron transport complexes of the respiratory chain. ATP synthase complex consist of a soluble F(1) head domain - the catalytic core - and a membrane F(1) domain - the membrane proton channel. These two domains are linked by a central stalk rotating inside the F(1) region and a stationary peripheral stalk. During catalysis, ATP synthesis in the catalytic domain of F(1) is coupled via a rotary mechanism of the central stalk subunits to proton translocation. In vivo, can only synthesize ATP although its ATP hydrolase activity can be activated artificially in vitro. With the catalytic subunit beta (ATP5F1B), forms the catalytic core in the F(1) domain. Subunit alpha does not bear the catalytic high-affinity ATP-binding sites. The protein is ATP synthase F(1) complex subunit alpha, mitochondrial of Bos taurus (Bovine).